We begin with the raw amino-acid sequence, 678 residues long: Chloride channel protein ClC-Kb (678 aa).

Residues 1–50 (MEELVGLREGSSGNPVALRELWSPCPRLRRGIRGGLEWLKQKLFRVGEDW) are Cytoplasmic-facing. 2 consecutive transmembrane segments (helical) span residues 51-82 (YFLMTLGVLMALISYAMNFALGRVVRAHKWLY) and 91-111 (LRYLSWTVYPVALVSFSSGFS). An intramembrane region (helical) is located at residues 116 to 127 (PFSGGSGIPELK). Chloride is bound at residue serine 121. 2 helical membrane-spanning segments follow: residues 141–160 (IKNFGAKVVGLSCTLATGST) and 161–180 (LFLGKVGPFVHLSVMIAAYL). The segment at residues 203-224 (AGAAVGVATVFAAPFSGVLFCI) is an intramembrane region (helical). A helical transmembrane segment spans residues 236–255 (YWRGFFAATCGAFMFRLLAV). Positions 259, 261, 278, and 281 each coordinate Ca(2+). The next 2 membrane-spanning stretches (helical) occupy residues 282-310 (IFFFVLLGAICGVASCAYLYCQRTFLAFT) and 325-342 (PLYAALAATVLASITYPP). Positions 349–360 (ASRLSMREHLDT) form an intramembrane region, helical. Residue asparagine 364 is glycosylated (N-linked (GlcNAc...) asparagine). 2 consecutive transmembrane segments (helical) span residues 400–420 (GTLAFFLVMKFWMLILATTIP) and 421–440 (MPAGYFLPIFIIGAAIGRLL). Residue phenylalanine 426 coordinates chloride. The segment at residues 464–496 (GGYALAGAAAFSGAVTHSISTALLAFELTGQIV) is an intramembrane region (helical). A helical transmembrane segment spans residues 500–520 (PVLMAVLAANAIAQSCQPSFY). Over 521–678 (DGTIMVKKLP…SWVERQHTGF (158 aa)) the chain is Cytoplasmic. 2 consecutive CBS domains span residues 551 to 612 (MRRA…ARAS) and 620 to 678 (DILA…HTGF).

It belongs to the chloride channel (TC 2.A.49) family. CLCNKB subfamily. Homodimer. Interacts with BSND. N-glycosylated. In terms of tissue distribution, expressed predominantly in the kidney.

It localises to the basolateral cell membrane. It carries out the reaction chloride(in) = chloride(out). The enzyme catalyses iodide(out) = iodide(in). It catalyses the reaction nitrate(in) = nitrate(out). The catalysed reaction is bromide(in) = bromide(out). Its function is as follows. Anion-selective channel permeable to small monovalent anions with ion selectivity for chloride &gt; bromide &gt; nitrate &gt; iodide. Forms a homodimeric channel where each subunit has its own ion conduction pathway. May conduct double-barreled currents controlled by two types of gates, two fast gates that control each subunit independently and a slow common gate that opens and shuts off both subunits simultaneously. Assembles with the regulatory subunit BSND/Barttin for sorting at the basolateral plasma membrane domain and functional switch to the ion conducting state. CLCNKB:BSND channels display mostly a linear current-voltage relationship controlled by common gate. Mediates chloride conductance along nephron segments, namely the thick ascending limb of Henle's loop, convoluted tubule and the collecting duct, contributing to the maintenance of systemic acid-base and electrolyte homeostasis. Conducts chloride currents in the stria vascularis of the inner ear to establish the endocochlear potential necessary for normal hearing. In Oryctolagus cuniculus (Rabbit), this protein is Chloride channel protein ClC-Kb (CLCNKB).